The sequence spans 251 residues: Isopentenyl-diphosphate delta-isomerase (251 aa).

Lys49 is a substrate binding site. Positions 53 and 66 each coordinate Mg(2+). A Nudix hydrolase domain is found at 64-212; it reads LLHRAFSVFL…SNSFTPWFKL (149 aa). Residues Arg86 and Lys90 each coordinate substrate. Residue Cys102 is part of the active site. A substrate-binding site is contributed by Ser103. Mg(2+) is bound by residues Glu162 and Glu164. Glu164 is an active-site residue.

Belongs to the IPP isomerase type 1 family. Mg(2+) is required as a cofactor.

Its subcellular location is the cytoplasm. It catalyses the reaction isopentenyl diphosphate = dimethylallyl diphosphate. It participates in isoprenoid biosynthesis; dimethylallyl diphosphate biosynthesis; dimethylallyl diphosphate from isopentenyl diphosphate: step 1/1. Isopentenyl-diphosphate delta-isomerase; part of the second module of ergosterol biosynthesis pathway that includes the middle steps of the pathway. The second module is carried out in the vacuole and involves the formation of farnesyl diphosphate, which is also an important intermediate in the biosynthesis of ubiquinone, dolichol, heme and prenylated proteins. Activity by the mevalonate kinase first converts mevalonate into 5-phosphomevalonate. 5-phosphomevalonate is then further converted to 5-diphosphomevalonate by the phosphomevalonate kinase. The diphosphomevalonate decarboxylase then produces isopentenyl diphosphate. The isopentenyl-diphosphate delta-isomerase then catalyzes the 1,3-allylic rearrangement of the homoallylic substrate isopentenyl (IPP) to its highly electrophilic allylic isomer, dimethylallyl diphosphate (DMAPP). Finally the farnesyl diphosphate synthase catalyzes the sequential condensation of isopentenyl pyrophosphate with dimethylallyl pyrophosphate, and then with the resultant geranylpyrophosphate to the ultimate product farnesyl pyrophosphate. This Phaffia rhodozyma (Yeast) protein is Isopentenyl-diphosphate delta-isomerase.